The primary structure comprises 209 residues: Small ribosomal subunit protein uS3 (209 aa).

One can recognise a KH type-2 domain in the interval 38-107 (IRKVIKSKYA…RFIVNVEEIK (70 aa)).

It belongs to the universal ribosomal protein uS3 family. As to quaternary structure, part of the 30S ribosomal subunit. Forms a tight complex with proteins S10 and S14.

Functionally, binds the lower part of the 30S subunit head. Binds mRNA in the 70S ribosome, positioning it for translation. The protein is Small ribosomal subunit protein uS3 of Thermosipho melanesiensis (strain DSM 12029 / CIP 104789 / BI429).